A 129-amino-acid chain; its full sequence is Glyoxalase domain-containing protein 5 homolog (129 aa).

One can recognise a VOC domain in the interval 5–128 (RLDHLVLTVS…DYNLIEISNY (124 aa)).

This sequence belongs to the glyoxalase I family.

In Dictyostelium discoideum (Social amoeba), this protein is Glyoxalase domain-containing protein 5 homolog (glod5).